A 99-amino-acid polypeptide reads, in one-letter code: Integration host factor subunit alpha (99 aa).

Residues 49–75 form a disordered region; the sequence is FGNFDLRDKNQRPGRNPKTGEDIPITA.

It belongs to the bacterial histone-like protein family. In terms of assembly, heterodimer of an alpha and a beta chain.

Its function is as follows. This protein is one of the two subunits of integration host factor, a specific DNA-binding protein that functions in genetic recombination as well as in transcriptional and translational control. The protein is Integration host factor subunit alpha of Salmonella agona (strain SL483).